The sequence spans 425 residues: Pyruvate dehydrogenase E1 component subunit alpha-3, chloroplastic (425 aa).

The N-terminal 66 residues, 1–66 (MAAASSFTAA…VLPGNKAAPA (66 aa)), are a transit peptide targeting the chloroplast. 8 residues coordinate pyruvate: H109, Y135, R136, A184, I186, D224, G225, and N253. 8 residues coordinate thiamine diphosphate: Y135, R136, A184, I186, D224, G225, N253, and H322. D224 is a Mg(2+) binding site. N253 provides a ligand contact to Mg(2+).

As to quaternary structure, tetramer of 2 alpha and 2 beta subunits. The cofactor is thiamine diphosphate. It depends on Mg(2+) as a cofactor.

The protein localises to the plastid. Its subcellular location is the chloroplast. The enzyme catalyses N(6)-[(R)-lipoyl]-L-lysyl-[protein] + pyruvate + H(+) = N(6)-[(R)-S(8)-acetyldihydrolipoyl]-L-lysyl-[protein] + CO2. Functionally, the pyruvate dehydrogenase complex catalyzes the overall conversion of pyruvate to acetyl-CoA and CO(2). It contains multiple copies of three enzymatic components: pyruvate dehydrogenase (E1), dihydrolipoamide acetyltransferase (E2) and lipoamide dehydrogenase (E3). The polypeptide is Pyruvate dehydrogenase E1 component subunit alpha-3, chloroplastic (Oryza sativa subsp. japonica (Rice)).